The chain runs to 222 residues: uncharacterized protein (222 aa).

One can recognise an HTH gntR-type domain in the interval alanine 8–asparagine 77.

This is an uncharacterized protein from Mycoplasma pneumoniae (strain ATCC 29342 / M129 / Subtype 1) (Mycoplasmoides pneumoniae).